The sequence spans 149 residues: Large ribosomal subunit protein bL9 (149 aa).

Belongs to the bacterial ribosomal protein bL9 family.

In terms of biological role, binds to the 23S rRNA. The protein is Large ribosomal subunit protein bL9 of Bacillus licheniformis (strain ATCC 14580 / DSM 13 / JCM 2505 / CCUG 7422 / NBRC 12200 / NCIMB 9375 / NCTC 10341 / NRRL NRS-1264 / Gibson 46).